A 456-amino-acid polypeptide reads, in one-letter code: Ezy-1 protein (456 aa).

An N-terminal signal peptide occupies residues 1–28 (MQLSSSLRSARSAAASSGCALASRPVVA). Disordered regions lie at residues 167–189 (SDGG…DGDG), 273–310 (FTGK…GGSG), and 414–456 (QPAG…SPNM). Positions 281-293 (AEGDDGEDEEEGE) are enriched in acidic residues. The span at 418–428 (DGHEPEPKRPE) shows a compositional bias: basic and acidic residues.

The chain is Ezy-1 protein (Ezy-1) from Chlamydomonas reinhardtii (Chlamydomonas smithii).